A 356-amino-acid polypeptide reads, in one-letter code: Tyrosine recombinase XerS (356 aa).

The Core-binding (CB) domain maps to 16-121 (LMPWFVLEYY…ALSSLYKYLT (106 aa)). In terms of domain architecture, Tyr recombinase spans 169-354 (KFLDYVENEY…VNDEQKNALD (186 aa)). Active-site residues include Arg210, Lys234, His306, Arg309, and His332. Tyr341 serves as the catalytic O-(3'-phospho-DNA)-tyrosine intermediate.

This sequence belongs to the 'phage' integrase family. XerS subfamily.

It localises to the cytoplasm. With respect to regulation, ftsK is required for recombination. Functionally, site-specific tyrosine recombinase, which acts by catalyzing the cutting and rejoining of the recombining DNA molecules. Essential to convert dimers of the bacterial chromosome into monomers to permit their segregation at cell division. The protein is Tyrosine recombinase XerS of Streptococcus thermophilus (strain CNRZ 1066).